A 456-amino-acid polypeptide reads, in one-letter code: 3-isopropylmalate dehydratase large subunit (456 aa).

3 residues coordinate [4Fe-4S] cluster: cysteine 336, cysteine 396, and cysteine 399.

It belongs to the aconitase/IPM isomerase family. LeuC type 1 subfamily. Heterodimer of LeuC and LeuD. [4Fe-4S] cluster serves as cofactor.

The catalysed reaction is (2R,3S)-3-isopropylmalate = (2S)-2-isopropylmalate. Its pathway is amino-acid biosynthesis; L-leucine biosynthesis; L-leucine from 3-methyl-2-oxobutanoate: step 2/4. Functionally, catalyzes the isomerization between 2-isopropylmalate and 3-isopropylmalate, via the formation of 2-isopropylmaleate. The chain is 3-isopropylmalate dehydratase large subunit from Staphylococcus epidermidis (strain ATCC 12228 / FDA PCI 1200).